The chain runs to 430 residues: Na(+)/H(+) antiporter NhaA 2 (430 aa).

The next 10 helical transmembrane spans lie at 11–31 (FVHGESFAGLLLVGTALIAFI), 60–80 (LSLEHWVNDGLMAVFFLLVGL), 97–117 (VALAVTAALGGMLVPAALYTA), 127–147 (GWGVPMSTDIAFALGVLALLG), 181–201 (LNLTFLTLAALTWGAALYAGW), 215–235 (VLLWFFVLKSGLHATIAGVLL), 288–308 (HALHPFVTFLVLPVFALTNAG), 309–329 (VPVAAGGFGSVSLGVLLGLLL), 356–376 (WGHMVGSGLLAGIGFTMSLFV), and 393–413 (GVLLASVLAALLGAGWLLLGI).

Belongs to the NhaA Na(+)/H(+) (TC 2.A.33) antiporter family.

It is found in the cell membrane. The catalysed reaction is Na(+)(in) + 2 H(+)(out) = Na(+)(out) + 2 H(+)(in). Na(+)/H(+) antiporter that extrudes sodium in exchange for external protons. This chain is Na(+)/H(+) antiporter NhaA 2, found in Deinococcus geothermalis (strain DSM 11300 / CIP 105573 / AG-3a).